The sequence spans 122 residues: MPAARQQRGAGVEAAARALLEQAGLRLVVGNANYRGGELDLVMRDGQSLVFVEVRYRRDDRFGGGAASVDWRKRRKLVLAAQLFLGAHPALAALPCRFDVVDASGEPPVLHWIRDAFRADDC.

Belongs to the UPF0102 family.

The polypeptide is UPF0102 protein XOO3839 (Xanthomonas oryzae pv. oryzae (strain KACC10331 / KXO85)).